A 274-amino-acid polypeptide reads, in one-letter code: Large ribosomal subunit protein uL2 (274 aa).

Residues 221–274 (RGTAMNPVDHPHGGGEGKNFGKHPVTPWGVQTKGKKTRSNKRTDKFIVRRRSKK) are disordered.

The protein belongs to the universal ribosomal protein uL2 family. Part of the 50S ribosomal subunit. Forms a bridge to the 30S subunit in the 70S ribosome.

One of the primary rRNA binding proteins. Required for association of the 30S and 50S subunits to form the 70S ribosome, for tRNA binding and peptide bond formation. It has been suggested to have peptidyltransferase activity; this is somewhat controversial. Makes several contacts with the 16S rRNA in the 70S ribosome. This chain is Large ribosomal subunit protein uL2, found in Serratia proteamaculans (strain 568).